The primary structure comprises 368 residues: Propane 2-monooxygenase, hydroxylase component small subunit (368 aa).

This sequence belongs to the TmoE/XamoE family. As to quaternary structure, the propane 2-monooxygenase multicomponent enzyme system is composed of an electron transfer component and a monooxygenase component interacting with the effector protein MimD. The electron transfer component is composed of a reductase (MimB), and the monooxygenase component is formed by a large subunit (MimA) and a small subunit (MimC). Requires the presence of the chaperonin-like protein MimG to ensure a productive folding, resulting of a soluble MimC, which leads to the active form of MimABCD.

The catalysed reaction is propane + NADH + O2 + H(+) = propan-2-ol + NAD(+) + H2O. It catalyses the reaction acetone + NADH + O2 + H(+) = hydroxyacetone + NAD(+) + H2O. The enzyme catalyses butan-2-one + NADH + O2 + H(+) = 1-hydroxy-2-butanone + NAD(+) + H2O. It carries out the reaction phenol + NADH + O2 + H(+) = hydroquinone + NAD(+) + H2O. Its function is as follows. Component of the propane 2-monooxygenase multicomponent enzyme system which is involved in the degradation of propane via the O2-dependent hydroxylation of propane. Also involved in the degradation of acetone via the O2-dependent hydroxylation of acetone. Also able to catalyze the oxidation of phenol, methylethylketone (2-butanone), 1-propanol and 2-propanol. This Mycolicibacterium goodii (Mycobacterium goodii) protein is Propane 2-monooxygenase, hydroxylase component small subunit.